A 696-amino-acid chain; its full sequence is Phosphate acetyltransferase (696 aa).

The tract at residues 367-696 (FEHKLLEQAR…QSPHEKATAQ (330 aa)) is phosphate acetyltransferase.

The protein in the N-terminal section; belongs to the CobB/CobQ family. This sequence in the C-terminal section; belongs to the phosphate acetyltransferase and butyryltransferase family.

It localises to the cytoplasm. It catalyses the reaction acetyl-CoA + phosphate = acetyl phosphate + CoA. It participates in metabolic intermediate biosynthesis; acetyl-CoA biosynthesis; acetyl-CoA from acetate: step 2/2. Functionally, involved in acetate metabolism. The sequence is that of Phosphate acetyltransferase (pta) from Streptomyces avermitilis (strain ATCC 31267 / DSM 46492 / JCM 5070 / NBRC 14893 / NCIMB 12804 / NRRL 8165 / MA-4680).